A 153-amino-acid polypeptide reads, in one-letter code: 17.6 kDa class I heat shock protein (153 aa).

In terms of domain architecture, sHSP spans 38-153 (ETAAIVNARI…PMVKAIDISG (116 aa)).

It belongs to the small heat shock protein (HSP20) family. As to quaternary structure, forms oligomeric structures.

It localises to the cytoplasm. The sequence is that of 17.6 kDa class I heat shock protein (HSP17.6) from Helianthus annuus (Common sunflower).